The sequence spans 205 residues: Small ribosomal subunit protein uS4 (205 aa).

The span at 1 to 16 (MSKRESSKYKIDRRMG) shows a compositional bias: basic and acidic residues. The disordered stretch occupies residues 1-46 (MSKRESSKYKIDRRMGENIWGRPKSPVNRREYGPGQHGQRRKGKLS). The region spanning 94-157 (SRLDAIVYRA…KQLVIVLEAV (64 aa)) is the S4 RNA-binding domain.

The protein belongs to the universal ribosomal protein uS4 family. In terms of assembly, part of the 30S ribosomal subunit. Contacts protein S5. The interaction surface between S4 and S5 is involved in control of translational fidelity.

One of the primary rRNA binding proteins, it binds directly to 16S rRNA where it nucleates assembly of the body of the 30S subunit. Its function is as follows. With S5 and S12 plays an important role in translational accuracy. The chain is Small ribosomal subunit protein uS4 from Rhizobium johnstonii (strain DSM 114642 / LMG 32736 / 3841) (Rhizobium leguminosarum bv. viciae).